The sequence spans 1059 residues: Carbamoyl phosphate synthase large chain (1059 aa).

The segment at 1–401 is carboxyphosphate synthetic domain; sequence MPKRTDIHKI…ALLKAVASLE (401 aa). Residues Arg129, Arg169, Gly175, Gly176, Lys208, Ile210, Glu215, Gly241, Ile242, His243, Gln284, and Glu298 each coordinate ATP. One can recognise an ATP-grasp 1 domain in the interval 133-327; the sequence is KELMQELGEP…IAKLAAKIAV (195 aa). Residues Gln284, Glu298, and Asn300 each coordinate Mg(2+). Residues Gln284, Glu298, and Asn300 each contribute to the Mn(2+) site. Residues 402-546 are oligomerization domain; that stretch reads IDQKDLLSKE…YSTYETENES (145 aa). Positions 547-929 are carbamoyl phosphate synthetic domain; that stretch reads RRSAKPSVLV…ALYKAFAGAG (383 aa). Residues 671 to 861 form the ATP-grasp 2 domain; it reads DQVIKDLNLR…MAQLATKVIL (191 aa). ATP-binding residues include Arg707, Ala746, Leu748, Glu752, Gly777, Val778, His779, Ser780, Gln820, and Glu832. The Mg(2+) site is built by Gln820, Glu832, and Asn834. 3 residues coordinate Mn(2+): Gln820, Glu832, and Asn834. The MGS-like domain occupies 930 to 1059; sequence MEVPDNGAVL…EMTSFKTTEL (130 aa). The interval 930-1059 is allosteric domain; sequence MEVPDNGAVL…EMTSFKTTEL (130 aa).

Belongs to the CarB family. In terms of assembly, composed of two chains; the small (or glutamine) chain promotes the hydrolysis of glutamine to ammonia, which is used by the large (or ammonia) chain to synthesize carbamoyl phosphate. Tetramer of heterodimers (alpha,beta)4. Mg(2+) serves as cofactor. Requires Mn(2+) as cofactor.

It carries out the reaction hydrogencarbonate + L-glutamine + 2 ATP + H2O = carbamoyl phosphate + L-glutamate + 2 ADP + phosphate + 2 H(+). The enzyme catalyses hydrogencarbonate + NH4(+) + 2 ATP = carbamoyl phosphate + 2 ADP + phosphate + 2 H(+). It participates in amino-acid biosynthesis; L-arginine biosynthesis; carbamoyl phosphate from bicarbonate: step 1/1. Its pathway is pyrimidine metabolism; UMP biosynthesis via de novo pathway; (S)-dihydroorotate from bicarbonate: step 1/3. Its function is as follows. Large subunit of the glutamine-dependent carbamoyl phosphate synthetase (CPSase). CPSase catalyzes the formation of carbamoyl phosphate from the ammonia moiety of glutamine, carbonate, and phosphate donated by ATP, constituting the first step of 2 biosynthetic pathways, one leading to arginine and/or urea and the other to pyrimidine nucleotides. The large subunit (synthetase) binds the substrates ammonia (free or transferred from glutamine from the small subunit), hydrogencarbonate and ATP and carries out an ATP-coupled ligase reaction, activating hydrogencarbonate by forming carboxy phosphate which reacts with ammonia to form carbamoyl phosphate. The polypeptide is Carbamoyl phosphate synthase large chain (Limosilactobacillus fermentum (strain NBRC 3956 / LMG 18251) (Lactobacillus fermentum)).